The following is a 554-amino-acid chain: U4/U6 small nuclear ribonucleoprotein PRP4-like protein (554 aa).

A compositionally biased stretch (pro residues) spans 48-65; that stretch reads APIPMMPHPPVARPPTFR. Residues 48–99 are disordered; that stretch reads APIPMMPHPPVARPPTFRPPVSQNGGVKTSDSDSESDDEHIEISEESKQVRE. Residues 88-99 show a composition bias toward basic and acidic residues; sequence IEISEESKQVRE. 7 WD repeats span residues 253–292, 296–335, 337–376, 379–418, 421–460, 463–503, and 506–545; these read GDDRPLTGCSFSRDGKILATCSLSGVTKLWEMPQVTNTIA, DHKERATDVVFSPVDDCLATASADRTAKLWKTDGTLLQTF, GHLDRLARVAFHPSGKYLGTTSYDKTWRLWDINTGAELLL, GHSRSVYGIAFQQDGALAASCGLDSLARVWDLRTGRSILV, GHIKPVFSVNFSPNGYHLASGGEDNQCRIWDLRMRKSLYI, AHAN…LVKS, and GHESKVASLDITADSSCIATVSHDRTIKLWTSSGNDDEDE.

It is found in the nucleus speckle. In terms of biological role, participates in pre-mRNA splicing. Part of the U4/U5/U6 tri-snRNP complex, one of the building blocks of the spliceosome. Essential for reproduction. In female gametophyte, is necessary for the egg cell and central cell fate determination and hence reproductive success. Involved in a mechanism that prevents accessory cells from adopting gametic cell fate. Modulates egg cell signaling center that regulates the development of all female gametophytic cells. This is U4/U6 small nuclear ribonucleoprotein PRP4-like protein from Arabidopsis thaliana (Mouse-ear cress).